Reading from the N-terminus, the 407-residue chain is Protein-glutamine gamma-glutamyltransferase (407 aa).

The N-terminal stretch at 1 to 31 (MRIRRRALVFATMSAVLCTAGFMPSAGEAAA) is a signal peptide. Residues 32–76 (DNGAGEETKSYAETYRLTADDVANINALNESAPAASSAGPSFRAP) constitute a propeptide that is removed on maturation. Residues 62–72 (SAPAASSAGPS) are compositionally biased toward low complexity. A disordered region spans residues 62 to 98 (SAPAASSAGPSFRAPDSDDRVTPPAEPLDRMPDPYRP). Basic and acidic residues predominate over residues 76 to 94 (PDSDDRVTPPAEPLDRMPD). Residue C140 is part of the active site. Positions 282-322 (QDRSSSADKRKYGDPDAFRPAPGTGLVDMSRDRNIPRSPTS) are disordered. The span at 286-298 (SSADKRKYGDPDA) shows a compositional bias: basic and acidic residues. Active-site residues include D331 and H350.

The protein belongs to the bacterial TGase family.

The enzyme catalyses L-glutaminyl-[protein] + L-lysyl-[protein] = [protein]-L-lysyl-N(6)-5-L-glutamyl-[protein] + NH4(+). Its function is as follows. Catalyzes the cross-linking of proteins and the conjugation of polyamines to proteins. The protein is Protein-glutamine gamma-glutamyltransferase of Streptomyces mobaraensis (Streptoverticillium mobaraense).